We begin with the raw amino-acid sequence, 233 residues long: MNIFKLSRTDMVRLLYSLKGQGEHSPLDILVQSANMSAEKAANHLEIPEFLTRYERKKQKKEYGLSTNEIVELGNLCELTSLKSTAIQNWVKRDIKDLIGHPELGKKYSIEQAVILLIVRDLKSIYDFEHIRAILKVAFNTISDRSDDVISPIAYYESCAYVLDAIHHQDTPSMKESNLQEIAEQETERLRHRFEELNDSQWLKIRQIIAITVLSILTFHIQATAHKMTADIL.

This is an uncharacterized protein from Bacillus subtilis (strain 168).